The following is a 309-amino-acid chain: Cytochrome c biogenesis protein CcsA (309 aa).

8 helical membrane-spanning segments follow: residues 18 to 38 (LGLL…GAVF), 48 to 68 (LITI…WSIS), 73 to 93 (ISNL…GQLL), 102 to 122 (IIPS…CFVL), 148 to 168 (VMLS…VLFI), 216 to 236 (SILV…VWAN), 250 to 267 (TWAF…HMRI), and 279 to 299 (LAST…FLGI).

This sequence belongs to the CcmF/CycK/Ccl1/NrfE/CcsA family. As to quaternary structure, may interact with ccs1.

Its subcellular location is the cellular thylakoid membrane. Required during biogenesis of c-type cytochromes (cytochrome c6 and cytochrome f) at the step of heme attachment. This chain is Cytochrome c biogenesis protein CcsA, found in Prochlorococcus marinus (strain AS9601).